The primary structure comprises 176 residues: Large ribosomal subunit protein uL10 (176 aa).

The protein belongs to the universal ribosomal protein uL10 family. As to quaternary structure, part of the ribosomal stalk of the 50S ribosomal subunit. The N-terminus interacts with L11 and the large rRNA to form the base of the stalk. The C-terminus forms an elongated spine to which L12 dimers bind in a sequential fashion forming a multimeric L10(L12)X complex.

Forms part of the ribosomal stalk, playing a central role in the interaction of the ribosome with GTP-bound translation factors. The polypeptide is Large ribosomal subunit protein uL10 (Mycobacteroides abscessus (strain ATCC 19977 / DSM 44196 / CCUG 20993 / CIP 104536 / JCM 13569 / NCTC 13031 / TMC 1543 / L948) (Mycobacterium abscessus)).